Reading from the N-terminus, the 409-residue chain is tRNA-specific 2-thiouridylase MnmA (409 aa).

ATP is bound by residues 40–47 (GLSGGVDS) and L66. The active-site Nucleophile is the C127. An intrachain disulfide couples C127 to C237. G152 contributes to the ATP binding site. Residues 187 to 189 (KDQ) form an interaction with tRNA region. The active-site Cysteine persulfide intermediate is C237. The segment at 342 to 343 (RY) is interaction with tRNA.

Belongs to the MnmA/TRMU family.

Its subcellular location is the cytoplasm. The catalysed reaction is S-sulfanyl-L-cysteinyl-[protein] + uridine(34) in tRNA + AH2 + ATP = 2-thiouridine(34) in tRNA + L-cysteinyl-[protein] + A + AMP + diphosphate + H(+). Its function is as follows. Catalyzes the 2-thiolation of uridine at the wobble position (U34) of tRNA, leading to the formation of s(2)U34. The polypeptide is tRNA-specific 2-thiouridylase MnmA (Prochlorococcus marinus (strain MIT 9313)).